The following is a 255-amino-acid chain: Type III pantothenate kinase (255 aa).

6-13 (DVGNTNTV) contacts ATP. Substrate contacts are provided by residues Tyr-100 and 107–110 (GADR). Residue Asp-109 is the Proton acceptor of the active site. Position 129 (Asp-129) interacts with K(+). Thr-132 is an ATP binding site. Thr-184 contacts substrate.

This sequence belongs to the type III pantothenate kinase family. In terms of assembly, homodimer. It depends on NH4(+) as a cofactor. The cofactor is K(+).

It is found in the cytoplasm. The catalysed reaction is (R)-pantothenate + ATP = (R)-4'-phosphopantothenate + ADP + H(+). The protein operates within cofactor biosynthesis; coenzyme A biosynthesis; CoA from (R)-pantothenate: step 1/5. Catalyzes the phosphorylation of pantothenate (Pan), the first step in CoA biosynthesis. The protein is Type III pantothenate kinase of Syntrophotalea carbinolica (strain DSM 2380 / NBRC 103641 / GraBd1) (Pelobacter carbinolicus).